Reading from the N-terminus, the 462-residue chain is Argininosuccinate lyase 2 (462 aa).

Belongs to the lyase 1 family. Argininosuccinate lyase subfamily.

The protein resides in the cytoplasm. The enzyme catalyses 2-(N(omega)-L-arginino)succinate = fumarate + L-arginine. The protein operates within amino-acid biosynthesis; L-arginine biosynthesis; L-arginine from L-ornithine and carbamoyl phosphate: step 3/3. The polypeptide is Argininosuccinate lyase 2 (Shouchella clausii (strain KSM-K16) (Alkalihalobacillus clausii)).